Reading from the N-terminus, the 544-residue chain is Elongator complex protein 3 (544 aa).

The 291-residue stretch at 79–369 folds into the Radical SAM core domain; sequence RTASGIAVVA…YRIQRDIPMP (291 aa). Cys-96, Cys-106, and Cys-109 together coordinate [4Fe-4S] cluster. Acetyl-CoA is bound by residues Lys-161, 472 to 475, 495 to 497, and Tyr-528; these read ELHV and FGT. Residues 393-544 enclose the N-acetyltransferase domain; the sequence is TKCRDIRARE…LDGPYMSKWL (152 aa).

This sequence belongs to the ELP3 family. In terms of assembly, component of the elongator complex. It depends on [4Fe-4S] cluster as a cofactor.

Its subcellular location is the cytoplasm. The catalysed reaction is uridine(34) in tRNA + acetyl-CoA + S-adenosyl-L-methionine + H2O = 5-(carboxymethyl)uridine(34) in tRNA + 5'-deoxyadenosine + L-methionine + CoA + 2 H(+). The protein operates within tRNA modification; 5-methoxycarbonylmethyl-2-thiouridine-tRNA biosynthesis. Functionally, catalytic tRNA acetyltransferase subunit of the elongator complex which is required for multiple tRNA modifications, including mcm5U (5-methoxycarbonylmethyl uridine), mcm5s2U (5-methoxycarbonylmethyl-2-thiouridine), and ncm5U (5-carbamoylmethyl uridine). In the elongator complex, acts as a tRNA uridine(34) acetyltransferase, which mediates formation of carboxymethyluridine in the wobble base at position 34 in tRNAs. The chain is Elongator complex protein 3 from Schizosaccharomyces pombe (strain 972 / ATCC 24843) (Fission yeast).